We begin with the raw amino-acid sequence, 118 residues long: Ribulose bisphosphate carboxylase small subunit (118 aa).

This sequence belongs to the RuBisCO small chain family. Heterohexadecamer of 8 large and 8 small subunits.

Functionally, ruBisCO catalyzes two reactions: the carboxylation of D-ribulose 1,5-bisphosphate, the primary event in carbon dioxide fixation, as well as the oxidative fragmentation of the pentose substrate. Both reactions occur simultaneously and in competition at the same active site. Although the small subunit is not catalytic it is essential for maximal activity. The sequence is that of Ribulose bisphosphate carboxylase small subunit from Rhodobacter capsulatus (Rhodopseudomonas capsulata).